Here is a 633-residue protein sequence, read N- to C-terminus: Probable potassium transport system protein Kup 3 (633 aa).

11 helical membrane-spanning segments follow: residues 61 to 81, 107 to 127, 143 to 163, 173 to 193, 211 to 231, 255 to 275, 287 to 307, 345 to 365, 371 to 391, 402 to 422, and 427 to 447; these read LVSLVLWTLTAIVTIKYVLFL, PVLMFFAGVLGAALFIGDAMI, VAPALHDYVLPISVVIILLLF, VSVFFGPITLVWFLVMAAAGV, AIGFLWNAGLIGFIVLGAIFL, WFAVVFPALALNYLGQGALVL, LMFPNWALLPMVILATAGTII, IYLPLVNTILLTGVLALMLMF, LAPAYGVSITGAMVIDTILAF, ALTAIAVLLPLFSLELIFLGA, and IHHGGYVPILIAGTLIMMMWT.

The protein belongs to the HAK/KUP transporter (TC 2.A.72) family.

It localises to the cell inner membrane. It catalyses the reaction K(+)(in) + H(+)(in) = K(+)(out) + H(+)(out). Its function is as follows. Transport of potassium into the cell. Likely operates as a K(+):H(+) symporter. This chain is Probable potassium transport system protein Kup 3, found in Sinorhizobium medicae (strain WSM419) (Ensifer medicae).